We begin with the raw amino-acid sequence, 544 residues long: Chaperonin GroEL (544 aa).

ATP is bound by residues 29–32, lysine 50, 86–90, glycine 414, 479–481, and aspartate 495; these read TLGP, DGTTT, and DAA.

The protein belongs to the chaperonin (HSP60) family. As to quaternary structure, forms a cylinder of 14 subunits composed of two heptameric rings stacked back-to-back. Interacts with the co-chaperonin GroES.

The protein localises to the cytoplasm. The enzyme catalyses ATP + H2O + a folded polypeptide = ADP + phosphate + an unfolded polypeptide.. Together with its co-chaperonin GroES, plays an essential role in assisting protein folding. The GroEL-GroES system forms a nano-cage that allows encapsulation of the non-native substrate proteins and provides a physical environment optimized to promote and accelerate protein folding. The protein is Chaperonin GroEL of Treponema denticola (strain ATCC 35405 / DSM 14222 / CIP 103919 / JCM 8153 / KCTC 15104).